A 196-amino-acid polypeptide reads, in one-letter code: Ribosomal RNA large subunit methyltransferase E (196 aa).

S-adenosyl-L-methionine is bound by residues G52, W54, D72, D88, and D111. Residue K151 is the Proton acceptor of the active site.

This sequence belongs to the class I-like SAM-binding methyltransferase superfamily. RNA methyltransferase RlmE family.

It is found in the cytoplasm. The catalysed reaction is uridine(2552) in 23S rRNA + S-adenosyl-L-methionine = 2'-O-methyluridine(2552) in 23S rRNA + S-adenosyl-L-homocysteine + H(+). Its function is as follows. Specifically methylates the uridine in position 2552 of 23S rRNA at the 2'-O position of the ribose in the fully assembled 50S ribosomal subunit. This is Ribosomal RNA large subunit methyltransferase E from Cenarchaeum symbiosum (strain A).